The primary structure comprises 83 residues: Delta-conotoxin-like Ac6.1 (83 aa).

Positions Met-1–Ala-22 are cleaved as a signal peptide. A propeptide spanning residues Asp-23 to Arg-51 is cleaved from the precursor. 3 disulfide bridges follow: Cys-54–Cys-69, Cys-61–Cys-73, and Cys-68–Cys-78. Residues Pro-57 and Pro-65 each carry the 4-hydroxyproline modification.

Belongs to the conotoxin O1 superfamily. Expressed by the venom duct.

Its subcellular location is the secreted. Delta-conotoxins bind to site 6 of voltage-gated sodium channels (Nav) and inhibit the inactivation process. The sequence is that of Delta-conotoxin-like Ac6.1 from Conus achatinus (Little frog cone).